The chain runs to 449 residues: Cortexillin-2 (449 aa).

The actin-binding stretch occupies residues 1–231 (MTDLHKEWEK…ILYTSLFFHA (231 aa)). 2 consecutive Calponin-homology (CH) domains span residues 10-119 (KVQE…RKYR) and 128-233 (KSSE…HAYR). Coiled-coil stretches lie at residues 232–364 (YRAK…AEGL) and 408–441 (QFEEQAKRLGSKVENENISLEKYLSLKEEELKSA).

The protein belongs to the cortexillin family. In terms of assembly, homodimer; parallel.

The protein resides in the cytoplasm. The protein localises to the cytoskeleton. Actin-bundling protein. When linked to F-actin the actin filaments form preferentially anti-parallel bundles that associate into meshworks. Plays a major role in cytokinesis. This is Cortexillin-2 (ctxB) from Heterostelium pallidum (strain ATCC 26659 / Pp 5 / PN500) (Cellular slime mold).